The chain runs to 268 residues: Glucosamine-6-phosphate deaminase (268 aa).

The active-site Proton acceptor; for enolization step is D72. Catalysis depends on D141, which acts as the For ring-opening step. H143 acts as the Proton acceptor; for ring-opening step in catalysis. Catalysis depends on E148, which acts as the For ring-opening step.

Belongs to the glucosamine/galactosamine-6-phosphate isomerase family. NagB subfamily. Homohexamer.

The catalysed reaction is alpha-D-glucosamine 6-phosphate + H2O = beta-D-fructose 6-phosphate + NH4(+). It participates in amino-sugar metabolism; N-acetylneuraminate degradation; D-fructose 6-phosphate from N-acetylneuraminate: step 5/5. With respect to regulation, allosterically activated by N-acetylglucosamine 6-phosphate (GlcNAc6P). Its function is as follows. Catalyzes the reversible isomerization-deamination of glucosamine 6-phosphate (GlcN6P) to form fructose 6-phosphate (Fru6P) and ammonium ion. This Proteus mirabilis (strain HI4320) protein is Glucosamine-6-phosphate deaminase.